Here is a 323-residue protein sequence, read N- to C-terminus: Sporulation-delaying protein SdpB (323 aa).

The next 6 membrane-spanning stretches (helical) occupy residues 27–49, 70–92, 112–134, 155–177, 219–241, and 248–270; these read LLGFSTLLVLLFNSTDILFSYSA, SINFEIIRYLMIFILTLVVIGWR, LTIDGGEQIATVLSFLILPVTLL, TVLFYIMTIIKIQVFIIYLNAAL, IVVITWLVTIFELFLAASIISNI, and LVLGILFHIGIIFSIGIVSFGLI.

The protein localises to the cell membrane. Functionally, required for the maturation of SdpC to SDP. Not required for SdpC signal peptide cleavage, secretion from the cell or disulfide bond formation. This Bacillus subtilis (strain 168) protein is Sporulation-delaying protein SdpB.